The chain runs to 834 residues: Protein argonaute (834 aa).

The 117-residue stretch at 210 to 326 (SLLQILMEYT…LPIEFCFVVK (117 aa)) folds into the PAZ domain. One can recognise a Piwi domain in the interval 500-799 (YLFFILDKNS…VSNLARYQDV (300 aa)).

The protein belongs to the argonaute family. Ago subfamily. Ago1, chp1 and tas3 interact to form the core of the RNA-induced transcriptional silencing (RITS) complex. The RITS complex interacts with the RDRC complex via interaction between ago1 and hrr1. Clr4 has a role in mediating this interaction. Component of the argonaute siRNA chaperone (ARC) complex composed of ago1, arb1 and arb2. Interacts with arb1.

The protein resides in the cytoplasm. Its subcellular location is the nucleus. It is found in the chromosome. It localises to the centromere. The protein localises to the telomere. Functionally, required for G1 arrest and mating in response to nitrogen starvation. Ago1 regulation of cytokinesis and cell cycle checkpoints occurs downstream of dcr1. Required, indirectly, for regulated hyperphosphorylation of cdc2. Has a role in the RNA interference (RNAi) pathway which is important for heterochromatin formation, accurate chromosome segregation, centromere cohesion and telomere function during mitosis and meiosis. Required for silencing at the centromeres and for initiation of transcriptionally silent heterochromatin at the mating type locus. Promotes histone H3K9 methylation necessary for centromere function. Required for recruitment of swi6 and cohesin to an ectopic dg repeat. A member of the RNA-induced transcriptional silencing (RITS) complex which is involved in the biosynthesis of dsRNA from primer siRNAs provided by the RNA-directed RNA polymerase (RDRC) complex. Has ribonuclease H-like cleavage (slicing) activity towards target messages complementary to siRNA and can direct site-specific cleavage of RNA substrates via siRNA. Slicing activity is required for both post-transcriptional and transcriptional gene silencing as well as for histone H3 'Lys-10' methylation spreading, conversion of double-stranded siRNA to single-stranded siRNA and siRNA-dependent association of ago1 with chromatin. A member of the argonaute siRNA chaperone (ARC) complex which is required for histone H3K9 methylation, heterochromatin assembly and siRNA generation. The ARC complex contains mostly double-stranded siRNA. The protein is Protein argonaute (ago1) of Schizosaccharomyces pombe (strain 972 / ATCC 24843) (Fission yeast).